Reading from the N-terminus, the 419-residue chain is eIF5-mimic protein 1 (419 aa).

Residues 1-22 (MNKHQKPVLTGQRFKTRKRDEK) form a disordered region. At Lys-117 the chain carries N6-acetyllysine. One can recognise a W2 domain in the interval 248 to 415 (VQQSLGTRKE…QNAEEESESE (168 aa)). Phosphoserine occurs at positions 412, 414, and 419.

The protein belongs to the BZW family. In terms of assembly, interacts with EIF3E, EIF2S2 and EIF3C.

The protein resides in the cytoplasm. Its function is as follows. Translation initiation regulator which represses non-AUG initiated translation and repeat-associated non-AUG (RAN) initiated translation by acting as a competitive inhibitor of eukaryotic translation initiation factor 5 (EIF5) function. Increases the accuracy of translation initiation by impeding EIF5-dependent translation from non-AUG codons by competing with it for interaction with EIF2S2 within the 43S pre-initiation complex (PIC) in an EIF3C-binding dependent manner. In Mus musculus (Mouse), this protein is eIF5-mimic protein 1 (Bzw2).